Consider the following 257-residue polypeptide: Phosphonates import ATP-binding protein PhnC (257 aa).

Residues 4 to 248 form the ABC transporter domain; that stretch reads IEFKNVSKVY…VFSEIYGRTI (245 aa). 37-44 contacts ATP; sequence GLSGAGKS.

The protein belongs to the ABC transporter superfamily. Phosphonates importer (TC 3.A.1.9.1) family. As to quaternary structure, the complex is composed of two ATP-binding proteins (PhnC), two transmembrane proteins (PhnE) and a solute-binding protein (PhnD).

The protein resides in the cell membrane. The catalysed reaction is phosphonate(out) + ATP + H2O = phosphonate(in) + ADP + phosphate + H(+). Functionally, part of the ABC transporter complex PhnCDE involved in phosphonates import. Responsible for energy coupling to the transport system. The chain is Phosphonates import ATP-binding protein PhnC from Staphylococcus aureus (strain COL).